Here is a 400-residue protein sequence, read N- to C-terminus: Homoserine O-acetyltransferase (400 aa).

The AB hydrolase-1 domain occupies 64–374; the sequence is NAILVCHALT…DKGHDAFLLD (311 aa). The active-site Nucleophile is the serine 169. Residue arginine 239 coordinates substrate. Active-site residues include aspartate 335 and histidine 368. Aspartate 369 serves as a coordination point for substrate.

This sequence belongs to the AB hydrolase superfamily. MetX family. In terms of assembly, homodimer.

Its subcellular location is the cytoplasm. It catalyses the reaction L-homoserine + acetyl-CoA = O-acetyl-L-homoserine + CoA. It participates in amino-acid biosynthesis; L-methionine biosynthesis via de novo pathway; O-acetyl-L-homoserine from L-homoserine: step 1/1. Its function is as follows. Transfers an acetyl group from acetyl-CoA to L-homoserine, forming acetyl-L-homoserine. The chain is Homoserine O-acetyltransferase from Rhodopseudomonas palustris (strain ATCC BAA-98 / CGA009).